The sequence spans 188 residues: U1 small nuclear ribonucleoprotein C-2 (188 aa).

The Matrin-type zinc finger occupies 4–36; it reads YYCDYCDVFLVSESPSVRKAHNSGRNHLTNVRD. The interval 57–188 is disordered; sequence FETGGGNSTS…MNPDRARQLG (132 aa). Positions 72-82 are enriched in pro residues; the sequence is GNPPGSQPGPP. The segment covering 109–124 has biased composition (low complexity); sequence AMLALMNGQNGMSSPG. Over residues 125 to 141 the composition is skewed to pro residues; it reads SGPPPMRFAGPPIPNNM.

This sequence belongs to the U1 small nuclear ribonucleoprotein C family. In terms of assembly, U1 snRNP is composed of the 7 core Sm proteins B/B', D1, D2, D3, E, F and G that assemble in a heptameric protein ring on the Sm site of the small nuclear RNA to form the core snRNP, and at least 3 U1 snRNP-specific proteins U1-70K, U1-A and U1-C. U1-C interacts with U1 snRNA and the 5' splice-site region of the pre-mRNA.

Its subcellular location is the nucleus. Functionally, component of the spliceosomal U1 snRNP, which is essential for recognition of the pre-mRNA 5' splice-site and the subsequent assembly of the spliceosome. U1-C is directly involved in initial 5' splice-site recognition for both constitutive and regulated alternative splicing. The interaction with the 5' splice-site seems to precede base-pairing between the pre-mRNA and the U1 snRNA. Stimulates commitment or early (E) complex formation by stabilizing the base pairing of the 5' end of the U1 snRNA and the 5' splice-site region. The polypeptide is U1 small nuclear ribonucleoprotein C-2 (Puccinia graminis f. sp. tritici (strain CRL 75-36-700-3 / race SCCL) (Black stem rust fungus)).